The following is a 184-amino-acid chain: Alpha-tubulin N-acetyltransferase (184 aa).

The 174-residue stretch at 1–174 (MNIPPEKMHN…NNFVIFAEYF (174 aa)) folds into the N-acetyltransferase domain. Acetyl-CoA is bound by residues 108-121 (FYIQ…GLGL) and 144-153 (SYKLQSFLKK).

It belongs to the acetyltransferase ATAT1 family.

It catalyses the reaction L-lysyl-[alpha-tubulin] + acetyl-CoA = N(6)-acetyl-L-lysyl-[alpha-tubulin] + CoA + H(+). Its function is as follows. Specifically acetylates 'Lys-40' in alpha-tubulin on the lumenal side of microtubules. Promotes microtubule destabilization and accelerates microtubule dynamics; this activity may be independent of acetylation activity. Acetylates alpha-tubulin with a slow enzymatic rate, due to a catalytic site that is not optimized for acetyl transfer. Enters the microtubule through each end and diffuses quickly throughout the lumen of microtubules. Acetylates only long/old microtubules because of its slow acetylation rate since it does not have time to act on dynamically unstable microtubules before the enzyme is released. This Plasmodium knowlesi (strain H) protein is Alpha-tubulin N-acetyltransferase.